Consider the following 570-residue polypeptide: Urease subunit alpha (570 aa).

The 439-residue stretch at 132–570 (GGIDTHVHFL…VPMARRYFLF (439 aa)) folds into the Urease domain. Ni(2+) contacts are provided by H137, H139, and K220. Residue K220 is modified to N6-carboxylysine. H222 lines the substrate pocket. Ni(2+) contacts are provided by H249 and H275. H323 serves as the catalytic Proton donor. A Ni(2+)-binding site is contributed by D363.

This sequence belongs to the metallo-dependent hydrolases superfamily. Urease alpha subunit family. Heterotrimer of UreA (gamma), UreB (beta) and UreC (alpha) subunits. Three heterotrimers associate to form the active enzyme. Ni cation serves as cofactor. Carboxylation allows a single lysine to coordinate two nickel ions.

The protein localises to the cytoplasm. It carries out the reaction urea + 2 H2O + H(+) = hydrogencarbonate + 2 NH4(+). It participates in nitrogen metabolism; urea degradation; CO(2) and NH(3) from urea (urease route): step 1/1. This Corynebacterium glutamicum (strain ATCC 13032 / DSM 20300 / JCM 1318 / BCRC 11384 / CCUG 27702 / LMG 3730 / NBRC 12168 / NCIMB 10025 / NRRL B-2784 / 534) protein is Urease subunit alpha.